A 763-amino-acid polypeptide reads, in one-letter code: Phosphoglycerol transferase I (763 aa).

Transmembrane regions (helical) follow at residues 1–21 (MSEL…AWKA), 24–44 (NTWW…LNIT), 77–97 (ILPG…LGWI), and 108–128 (VGYS…SPAF).

Belongs to the OpgB family.

It localises to the cell inner membrane. The enzyme catalyses a phosphatidylglycerol + a membrane-derived-oligosaccharide D-glucose = a 1,2-diacyl-sn-glycerol + a membrane-derived-oligosaccharide 6-(glycerophospho)-D-glucose.. It participates in glycan metabolism; osmoregulated periplasmic glucan (OPG) biosynthesis. Functionally, transfers a phosphoglycerol residue from phosphatidylglycerol to the membrane-bound nascent glucan backbones. This Salmonella arizonae (strain ATCC BAA-731 / CDC346-86 / RSK2980) protein is Phosphoglycerol transferase I.